The chain runs to 475 residues: Ribulose bisphosphate carboxylase large chain (475 aa).

The propeptide occupies 1 to 2 (MS). Residue P3 is modified to N-acetylproline. N6,N6,N6-trimethyllysine is present on K14. The substrate site is built by N123 and T173. K175 (proton acceptor) is an active-site residue. K177 contributes to the substrate binding site. Residues K201, D203, and E204 each contribute to the Mg(2+) site. At K201 the chain carries N6-carboxylysine. The Proton acceptor role is filled by H294. Substrate-binding residues include R295, H327, and S379.

The protein belongs to the RuBisCO large chain family. Type I subfamily. As to quaternary structure, heterohexadecamer of 8 large chains and 8 small chains; disulfide-linked. The disulfide link is formed within the large subunit homodimers. Mg(2+) serves as cofactor. Post-translationally, the disulfide bond which can form in the large chain dimeric partners within the hexadecamer appears to be associated with oxidative stress and protein turnover.

It localises to the plastid. Its subcellular location is the chloroplast. The enzyme catalyses 2 (2R)-3-phosphoglycerate + 2 H(+) = D-ribulose 1,5-bisphosphate + CO2 + H2O. The catalysed reaction is D-ribulose 1,5-bisphosphate + O2 = 2-phosphoglycolate + (2R)-3-phosphoglycerate + 2 H(+). Functionally, ruBisCO catalyzes two reactions: the carboxylation of D-ribulose 1,5-bisphosphate, the primary event in carbon dioxide fixation, as well as the oxidative fragmentation of the pentose substrate in the photorespiration process. Both reactions occur simultaneously and in competition at the same active site. The polypeptide is Ribulose bisphosphate carboxylase large chain (Psilotum nudum (Whisk fern)).